A 413-amino-acid polypeptide reads, in one-letter code: Multifunctional CCA protein (413 aa).

Residues G8 and R11 each contribute to the ATP site. The CTP site is built by G8 and R11. 2 residues coordinate Mg(2+): D21 and D23. The ATP site is built by R91, R137, and R140. 3 residues coordinate CTP: R91, R137, and R140. An HD domain is found at 228–329 (TGVHTLMTLS…VKLFDAIDAW (102 aa)).

It belongs to the tRNA nucleotidyltransferase/poly(A) polymerase family. Bacterial CCA-adding enzyme type 1 subfamily. In terms of assembly, monomer. Can also form homodimers and oligomers. Mg(2+) serves as cofactor. Requires Ni(2+) as cofactor.

It carries out the reaction a tRNA precursor + 2 CTP + ATP = a tRNA with a 3' CCA end + 3 diphosphate. It catalyses the reaction a tRNA with a 3' CCA end + 2 CTP + ATP = a tRNA with a 3' CCACCA end + 3 diphosphate. Functionally, catalyzes the addition and repair of the essential 3'-terminal CCA sequence in tRNAs without using a nucleic acid template. Adds these three nucleotides in the order of C, C, and A to the tRNA nucleotide-73, using CTP and ATP as substrates and producing inorganic pyrophosphate. tRNA 3'-terminal CCA addition is required both for tRNA processing and repair. Also involved in tRNA surveillance by mediating tandem CCA addition to generate a CCACCA at the 3' terminus of unstable tRNAs. While stable tRNAs receive only 3'-terminal CCA, unstable tRNAs are marked with CCACCA and rapidly degraded. This is Multifunctional CCA protein from Salmonella schwarzengrund (strain CVM19633).